A 431-amino-acid polypeptide reads, in one-letter code: Septin-11 (431 aa).

Ala-2 is modified (N-acetylalanine). Ser-9 is modified (phosphoserine). A Septin-type G domain is found at 38–304 (QGFCFNILCV…ELYRRCKLEE (267 aa)). The tract at residues 48–55 (GETGIGKS) is G1 motif. Residues 48–55 (GETGIGKS), Gly-103, 184–192 (KADTIAKNE), Gly-238, and Arg-253 each bind GTP. A G3 motif region spans residues 100–103 (DTVG). Positions 183 to 186 (AKAD) are G4 motif. Residues 320–413 (QETYEAKRNE…LLQSQAQQSG (94 aa)) are a coiled coil. Residues 400–431 (AAAQLLQSQAQQSGAQQTKKDKDKKNPWLCTE) are disordered. Residues 401–416 (AAQLLQSQAQQSGAQQ) are compositionally biased toward low complexity.

Belongs to the TRAFAC class TrmE-Era-EngA-EngB-Septin-like GTPase superfamily. Septin GTPase family. Septins polymerize into heterooligomeric protein complexes that form filaments, and can associate with cellular membranes, actin filaments and microtubules. Forms homooligomers. GTPase activity is required for filament formation. Interacts with SEPTIN7, SEPTIN9 and SEPTIN12. In terms of tissue distribution, expressed in the cerebral cortex (at protein level).

Its subcellular location is the cytoplasm. It localises to the cytoskeleton. The protein resides in the synapse. It is found in the cell projection. The protein localises to the dendritic spine. Its subcellular location is the axon. Its function is as follows. Filament-forming cytoskeletal GTPase. May play a role in cytokinesis (Potential). May play a role in the cytoarchitecture of neurons, including dendritic arborization and dendritic spines, and in GABAergic synaptic connectivity. The chain is Septin-11 from Mus musculus (Mouse).